The primary structure comprises 438 residues: Ribosomal protein uS12 methylthiotransferase RimO (438 aa).

The MTTase N-terminal domain maps to 6–118 (KQLCLISLGC…IDILIAKKQN (113 aa)). 6 residues coordinate [4Fe-4S] cluster: Cys15, Cys49, Cys81, Cys150, Cys154, and Cys157. Residues 136-364 (TGSSVHAYVK…NKIALKHQHN (229 aa)) enclose the Radical SAM core domain.

The protein belongs to the methylthiotransferase family. RimO subfamily. [4Fe-4S] cluster serves as cofactor.

Its subcellular location is the cytoplasm. The catalysed reaction is L-aspartate(89)-[ribosomal protein uS12]-hydrogen + (sulfur carrier)-SH + AH2 + 2 S-adenosyl-L-methionine = 3-methylsulfanyl-L-aspartate(89)-[ribosomal protein uS12]-hydrogen + (sulfur carrier)-H + 5'-deoxyadenosine + L-methionine + A + S-adenosyl-L-homocysteine + 2 H(+). Catalyzes the methylthiolation of an aspartic acid residue of ribosomal protein uS12. This chain is Ribosomal protein uS12 methylthiotransferase RimO, found in Helicobacter acinonychis (strain Sheeba).